The following is a 485-amino-acid chain: E3 ubiquitin-protein ligase TRIM68 (485 aa).

Residues 16–61 form an RING-type zinc finger; that stretch reads CPICMTFLREPMSIDCGHSFCHSCLSGLWEIPGESQNWGYTCPLCR. Residues 93–134 form a B box-type zinc finger; sequence LKGDLCERHGEKLKMFCKEDVLIMCEACSQSPEHEAHSVVPM. 4 residues coordinate Zn(2+): Cys-98, His-101, Cys-120, and His-126. Positions 207–239 form a coiled coil; the sequence is AEVAAALASLQREAAETMQKLELNHSELIQQSQ. The B30.2/SPRY domain occupies 285–481; that stretch reads LKTDCRVLGL…NTAPLAICSL (197 aa).

It belongs to the TRIM/RBCC family. In terms of assembly, interacts with AR/androgen receptor (via ligand-binding domain). Interacts with KAT5/TIP60. Post-translationally, auto-ubiquitinated. In terms of tissue distribution, widely expressed. Expressed at high levels in prostate cancer cell lines. Up-regulation could be restricted to androgen-dependent cells.

The protein localises to the cytoplasm. The protein resides in the perinuclear region. It localises to the nucleus. It catalyses the reaction S-ubiquitinyl-[E2 ubiquitin-conjugating enzyme]-L-cysteine + [acceptor protein]-L-lysine = [E2 ubiquitin-conjugating enzyme]-L-cysteine + N(6)-ubiquitinyl-[acceptor protein]-L-lysine.. Its pathway is protein modification; protein ubiquitination. Functionally, functions as a ubiquitin E3 ligase. Acts as a coactivator of androgen receptor (AR) depending on its ubiquitin ligase activity. The polypeptide is E3 ubiquitin-protein ligase TRIM68 (TRIM68) (Homo sapiens (Human)).